Consider the following 94-residue polypeptide: Aspartyl/glutamyl-tRNA(Asn/Gln) amidotransferase subunit C (94 aa).

This sequence belongs to the GatC family. In terms of assembly, heterotrimer of A, B and C subunits.

It carries out the reaction L-glutamyl-tRNA(Gln) + L-glutamine + ATP + H2O = L-glutaminyl-tRNA(Gln) + L-glutamate + ADP + phosphate + H(+). The catalysed reaction is L-aspartyl-tRNA(Asn) + L-glutamine + ATP + H2O = L-asparaginyl-tRNA(Asn) + L-glutamate + ADP + phosphate + 2 H(+). Its function is as follows. Allows the formation of correctly charged Asn-tRNA(Asn) or Gln-tRNA(Gln) through the transamidation of misacylated Asp-tRNA(Asn) or Glu-tRNA(Gln) in organisms which lack either or both of asparaginyl-tRNA or glutaminyl-tRNA synthetases. The reaction takes place in the presence of glutamine and ATP through an activated phospho-Asp-tRNA(Asn) or phospho-Glu-tRNA(Gln). This Desulfatibacillum aliphaticivorans protein is Aspartyl/glutamyl-tRNA(Asn/Gln) amidotransferase subunit C.